We begin with the raw amino-acid sequence, 872 residues long: Alanine--tRNA ligase (872 aa).

Zn(2+) is bound by residues histidine 567, histidine 571, cysteine 669, and histidine 673.

The protein belongs to the class-II aminoacyl-tRNA synthetase family. Requires Zn(2+) as cofactor.

The protein localises to the cytoplasm. The catalysed reaction is tRNA(Ala) + L-alanine + ATP = L-alanyl-tRNA(Ala) + AMP + diphosphate. In terms of biological role, catalyzes the attachment of alanine to tRNA(Ala) in a two-step reaction: alanine is first activated by ATP to form Ala-AMP and then transferred to the acceptor end of tRNA(Ala). Also edits incorrectly charged Ser-tRNA(Ala) and Gly-tRNA(Ala) via its editing domain. This Streptococcus pyogenes serotype M18 (strain MGAS8232) protein is Alanine--tRNA ligase.